Consider the following 677-residue polypeptide: Fermitin family homolog 1 (677 aa).

Positions 96-653 (MLRLRLPNLK…HEYIGGYIFL (558 aa)) constitute an FERM domain. Phosphoserine occurs at positions 170, 179, and 361. Residues 377-473 (KLFRPKKLLP…WMAACMLASK (97 aa)) form the PH domain.

It belongs to the kindlin family. As to quaternary structure, interacts with the cytoplasmic domain of integrins ITGB1 and ITGB3. As to expression, expressed in brain, skeletal muscle, kidney, colon, adrenal gland, prostate, and placenta. Weakly or not expressed in heart, thymus, spleen, liver, small intestine, bone marrow, lung and peripheral blood leukocytes. Overexpressed in some colon and lung tumors. In skin, it is localized within the epidermis and particularly in basal keratocytes. Not detected in epidermal melanocytes and dermal fibroblasts.

The protein resides in the cytoplasm. It localises to the cytoskeleton. It is found in the cell junction. The protein localises to the focal adhesion. Its subcellular location is the cell projection. The protein resides in the ruffle membrane. Its function is as follows. Involved in cell adhesion. Contributes to integrin activation. When coexpressed with talin, potentiates activation of ITGA2B. Required for normal keratinocyte proliferation. Required for normal polarization of basal keratinocytes in skin, and for normal cell shape. Required for normal adhesion of keratinocytes to fibronectin and laminin, and for normal keratinocyte migration to wound sites. May mediate TGF-beta 1 signaling in tumor progression. In Homo sapiens (Human), this protein is Fermitin family homolog 1 (FERMT1).